We begin with the raw amino-acid sequence, 267 residues long: MNRITETFARLRSSGRIALMPYLTVGFPERESTLELVPALEAAGASLFELGIPFSDPLADGATIQRATQRALENGVTIADCITTVAQLRARNVKAPLLLMGYYNPLLRYGLERACAELAAAGGDGWIIPDLPLEEAAELRPIAAAHHLDLIMFIAPTTPPTRITQIVAHASGFLYIVSLTGVTGARQTLAANLADLITTVRQQTDLPLVVGFGISQPSHVAEVARLADGAIVGSALIDRLERLAPSERVSGATAYIRELVSATERVH.

Catalysis depends on proton acceptor residues E49 and D60.

Belongs to the TrpA family. In terms of assembly, tetramer of two alpha and two beta chains.

It catalyses the reaction (1S,2R)-1-C-(indol-3-yl)glycerol 3-phosphate + L-serine = D-glyceraldehyde 3-phosphate + L-tryptophan + H2O. It functions in the pathway amino-acid biosynthesis; L-tryptophan biosynthesis; L-tryptophan from chorismate: step 5/5. In terms of biological role, the alpha subunit is responsible for the aldol cleavage of indoleglycerol phosphate to indole and glyceraldehyde 3-phosphate. In Chloroflexus aggregans (strain MD-66 / DSM 9485), this protein is Tryptophan synthase alpha chain.